The sequence spans 679 residues: DNA ligase (679 aa).

Residues 41–45, 90–91, and Glu-120 contribute to the NAD(+) site; these read DSVYD and SL. Catalysis depends on Lys-122, which acts as the N6-AMP-lysine intermediate. Arg-143, Glu-177, Lys-293, and Lys-317 together coordinate NAD(+). Positions 411, 414, 429, and 434 each coordinate Zn(2+). The BRCT domain maps to 597–679; sequence DSNSWFAGKR…SETMREDAQA (83 aa).

Belongs to the NAD-dependent DNA ligase family. LigA subfamily. Mg(2+) is required as a cofactor. Mn(2+) serves as cofactor.

The enzyme catalyses NAD(+) + (deoxyribonucleotide)n-3'-hydroxyl + 5'-phospho-(deoxyribonucleotide)m = (deoxyribonucleotide)n+m + AMP + beta-nicotinamide D-nucleotide.. In terms of biological role, DNA ligase that catalyzes the formation of phosphodiester linkages between 5'-phosphoryl and 3'-hydroxyl groups in double-stranded DNA using NAD as a coenzyme and as the energy source for the reaction. It is essential for DNA replication and repair of damaged DNA. This is DNA ligase from Lactiplantibacillus plantarum (strain ATCC BAA-793 / NCIMB 8826 / WCFS1) (Lactobacillus plantarum).